We begin with the raw amino-acid sequence, 109 residues long: Aquaporin-2 (109 aa).

Residues 1–6 are Cytoplasmic-facing; that stretch reads SVAFSR. Residues 7 to 27 form a helical membrane-spanning segment; that stretch reads AVLAEFLATLIFVFFGLGSAL. The Extracellular segment spans residues 28–35; it reads SWPQALPS. A helical membrane pass occupies residues 36–54; sequence VLQIALAFGLAIGTLVQAL. Residues 55-59 are Cytoplasmic-facing; that stretch reads GHVSG. An intramembrane region (discontinuously helical) is located at residues 60–69; that stretch reads AHINPAVTVA. Positions 63-65 match the NPA 1 motif; that stretch reads NPA. The Cytoplasmic portion of the chain corresponds to 70 to 80; it reads CLVGCHVSFLR. The helical transmembrane segment at 81 to 102 threads the bilayer; the sequence is AAFYVAAQLLGAVAGAAILHEI. Residues 103-109 are Extracellular-facing; that stretch reads TPPDVRG.

The protein belongs to the MIP/aquaporin (TC 1.A.8) family. As to quaternary structure, homotetramer. Post-translationally, serine phosphorylation is necessary and sufficient for expression at the apical membrane. Endocytosis is not phosphorylation-dependent. In terms of processing, N-glycosylated.

The protein localises to the apical cell membrane. It is found in the basolateral cell membrane. The protein resides in the cell membrane. Its subcellular location is the cytoplasmic vesicle membrane. It localises to the golgi apparatus. The protein localises to the trans-Golgi network membrane. The catalysed reaction is H2O(in) = H2O(out). It carries out the reaction glycerol(in) = glycerol(out). Forms a water-specific channel that provides the plasma membranes of renal collecting duct with high permeability to water, thereby permitting water to move in the direction of an osmotic gradient. Plays an essential role in renal water homeostasis. Could also be permeable to glycerol. The polypeptide is Aquaporin-2 (Dasypus novemcinctus (Nine-banded armadillo)).